A 254-amino-acid polypeptide reads, in one-letter code: Small ribosomal subunit protein uS2 (254 aa).

This sequence belongs to the universal ribosomal protein uS2 family.

In Oceanobacillus iheyensis (strain DSM 14371 / CIP 107618 / JCM 11309 / KCTC 3954 / HTE831), this protein is Small ribosomal subunit protein uS2.